Reading from the N-terminus, the 322-residue chain is Putative T-box protein 11 (322 aa).

A DNA-binding region (T-box) is located at residues 16-185; it reads LWRSCHEYDN…NNPYSTGSRK (170 aa). The span at 171-182 shows a compositional bias: polar residues; the sequence is TLKTNNNPYSTG. The disordered stretch occupies residues 171–214; it reads TLKTNNNPYSTGSRKDRRRERQSPVYSEGTSSEKSISPPPAKKI.

It is found in the nucleus. This chain is Putative T-box protein 11 (tbx-11), found in Caenorhabditis elegans.